The primary structure comprises 142 residues: Lysosomal enzyme trafficking factor (142 aa).

2 consecutive transmembrane segments (helical) span residues 8 to 28 (MGWI…YYIF) and 76 to 96 (LLPF…VFLF).

The protein belongs to the LYSET family.

The protein localises to the golgi apparatus membrane. Functionally, required for mannose-6-phosphate-dependent trafficking of lysosomal enzymes. LYSET bridges GlcNAc-1-phosphate transferase (GNPTAB), to the membrane-bound transcription factor site-1 protease (MBTPS1), thus allowing proteolytic activation of the GNPTAB. GNPTAB is involved in the regulation of M6P-dependent Golgi-to-lysosome trafficking of lysosomal enzymes. LYSET is thus an essential factor for maturation and delivery of lysosomal hydrolases. This is Lysosomal enzyme trafficking factor (tmem251) from Danio rerio (Zebrafish).